The primary structure comprises 220 residues: Putative glutathione S-transferase C460.02c (220 aa).

Residues 1-81 (MFLGTIYSFK…YFYEKGKHND (81 aa)) form the GST N-terminal domain. The GST C-terminal domain occupies 89 to 216 (NEIEEAEMLK…YPLELPLTVT (128 aa)).

Belongs to the GST superfamily.

The protein localises to the cytoplasm. It catalyses the reaction RX + glutathione = an S-substituted glutathione + a halide anion + H(+). Its function is as follows. Involved in the oxidative stress response and detoxification. In Schizosaccharomyces pombe (strain 972 / ATCC 24843) (Fission yeast), this protein is Putative glutathione S-transferase C460.02c.